The following is a 257-amino-acid chain: Triosephosphate isomerase (257 aa).

The substrate site is built by Asn11 and Lys13. The active-site Electrophile is His96. The active-site Proton acceptor is the Glu170.

It belongs to the triosephosphate isomerase family. As to quaternary structure, homodimer.

It is found in the cytoplasm. The enzyme catalyses D-glyceraldehyde 3-phosphate = dihydroxyacetone phosphate. The catalysed reaction is dihydroxyacetone phosphate = methylglyoxal + phosphate. It participates in carbohydrate biosynthesis; gluconeogenesis. It functions in the pathway carbohydrate degradation; glycolysis; D-glyceraldehyde 3-phosphate from glycerone phosphate: step 1/1. Its function is as follows. Triosephosphate isomerase is an extremely efficient metabolic enzyme that catalyzes the interconversion between dihydroxyacetone phosphate (DHAP) and D-glyceraldehyde-3-phosphate (G3P) in glycolysis and gluconeogenesis. It is also responsible for the non-negligible production of methylglyoxal a reactive cytotoxic side-product that modifies and can alter proteins, DNA and lipids. The protein is Triosephosphate isomerase of Giardia intestinalis (Giardia lamblia).